The primary structure comprises 101 residues: Synaptobrevin-B (101 aa).

Residues methionine 1 to lysine 76 lie on the Cytoplasmic side of the membrane. Residues lysine 13–arginine 73 enclose the v-SNARE coiled-coil homology domain. A helical; Anchor for type IV membrane protein transmembrane segment spans residues leucine 77–isoleucine 97. Over methionine 98–valine 101 the chain is Vesicular.

Belongs to the synaptobrevin family.

It is found in the cytoplasmic vesicle. It localises to the secretory vesicle membrane. Functionally, involved in the targeting and/or fusion of transport vesicles to their target membrane. In Dictyostelium discoideum (Social amoeba), this protein is Synaptobrevin-B (sybB).